The following is a 291-amino-acid chain: RPE-retinal G protein-coupled receptor (291 aa).

The Extracellular segment spans residues 1-15; it reads MAATRALPAGLGELE. The chain crosses the membrane as a helical span at residues 16–36; it reads VLAVGTVLLMEALSGISLNGL. The Cytoplasmic portion of the chain corresponds to 37–52; that stretch reads TIFSFCKTPDLRTPSN. The chain crosses the membrane as a helical span at residues 53–73; it reads LLVLSLALADTGISLNALVAA. At 74 to 91 the chain is on the extracellular side; that stretch reads VSSLLRRWPHGSEGCQVH. Residues cysteine 88 and cysteine 162 are joined by a disulfide bond. Residues 92–112 traverse the membrane as a helical segment; it reads GFQGFATALASICGSAAVAWG. Residues 113-130 lie on the Cytoplasmic side of the membrane; sequence RYHHYCTRRQLAWDTAIP. Residues 131–151 traverse the membrane as a helical segment; it reads LVLFVWMSSAFWASLPLMGWG. Residues 152–175 lie on the Extracellular side of the membrane; it reads HYDYEPVGTCCTLDYSRGDRNFIS. Residues 176–196 form a helical membrane-spanning segment; that stretch reads FLFTMAFFNFLVPLFITHTSY. At 197-219 the chain is on the cytoplasmic side; it reads RFMEQKFSRSGHLPVNTTLPGRM. Residues 220-240 form a helical membrane-spanning segment; sequence LLLGWGPYALLYLYAAIADVS. Topologically, residues 241–247 are extracellular; the sequence is FISPKLQ. Residues 248 to 268 form a helical membrane-spanning segment; it reads MVPALIAKTMPTINAINYALH. Position 255 is an N6-(retinylidene)lysine (lysine 255). The Cytoplasmic portion of the chain corresponds to 269–291; sequence REMVCRGTWQCLSPQKSKKDRTQ.

The protein belongs to the G-protein coupled receptor 1 family. Opsin subfamily. Covalently binds all-trans- and 11-cis-retinal.

The protein localises to the membrane. Its function is as follows. Receptor for all-trans- and 11-cis-retinal. Binds preferentially to the former and may catalyze the isomerization of the chromophore by a retinochrome-like mechanism. This Mus musculus (Mouse) protein is RPE-retinal G protein-coupled receptor (Rgr).